A 712-amino-acid polypeptide reads, in one-letter code: Patatin-like phospholipase domain-containing protein ACLA_029670 (712 aa).

A compositionally biased stretch (polar residues) spans 1-10; the sequence is MTSAEKSATR. Positions 1 to 20 are disordered; sequence MTSAEKSATRNIYDPSALPD. A helical membrane pass occupies residues 85–105; sequence WPFLFIVFAWITVLGIAYALT. The region spanning 275 to 466 is the PNPLA domain; the sequence is LCLSGGATFA…RTDIPIKALN (192 aa). Positions 306 to 310 match the GXSXG motif; the sequence is GTSGG. Catalysis depends on S308, which acts as the Nucleophile. The active-site Proton acceptor is the D453. Basic and acidic residues predominate over residues 649–664; that stretch reads FPERHSDYKDESHYTE. The interval 649–686 is disordered; that stretch reads FPERHSDYKDESHYTEVSDSLSTNSSRPHTPDARRGSI. Over residues 665–676 the composition is skewed to polar residues; sequence VSDSLSTNSSRP. Residues 677-686 are compositionally biased toward basic and acidic residues; the sequence is HTPDARRGSI.

The protein belongs to the PLPL family.

Its subcellular location is the membrane. Its function is as follows. Probable lipid hydrolase. In Aspergillus clavatus (strain ATCC 1007 / CBS 513.65 / DSM 816 / NCTC 3887 / NRRL 1 / QM 1276 / 107), this protein is Patatin-like phospholipase domain-containing protein ACLA_029670.